A 304-amino-acid polypeptide reads, in one-letter code: E3 ubiquitin-protein ligase CHIP (304 aa).

Basic and acidic residues predominate over residues Met1–Gly10. Positions Met1 to Leu30 are disordered. Lys2 is covalently cross-linked (Glycyl lysine isopeptide (Lys-Gly) (interchain with G-Cter in ubiquitin)). Over residues Ala11–Ser20 the composition is skewed to gly residues. Ser20 carries the post-translational modification Phosphoserine. A Glycyl lysine isopeptide (Lys-Gly) (interchain with G-Cter in ubiquitin) cross-link involves residue Lys23. Phosphoserine is present on residues Ser24 and Ser26. TPR repeat units follow at residues Ala27 to Val60, Ala61 to Ser94, and Lys96 to Gln128. The segment at Gly102–Ile201 is required for interaction with MAPK7. Residues Ala143–Gln197 are required for interaction with and ubiquitination of MYOCD. Positions Lys144–Gln198 are required for interaction with FOXO1. The segment at Lys144–Tyr304 is required for ubiquitination of FOXO1. Ser150 carries the post-translational modification Phosphoserine. Glycyl lysine isopeptide (Lys-Gly) (interchain with G-Cter in ubiquitin) cross-links involve residues Lys222 and Lys256. The region spanning Asp227–Val301 is the U-box domain. Ser274 is modified (phosphoserine).

As to quaternary structure, homodimer. Interacts with BAG2, and with the E2 ubiquitin conjugating enzymes UBE2D1, UBE2D2 and UBE2D3. Detected in a ternary complex containing STUB1, HSPA1A and HSPBP1. Part of a complex composed of STUB1/CHIP, VCP/p97, CHRNA3, and UBXN2A that modulates the ubiquitination and endoplasmic reticulum-associated degradation (ERAD) of CHRNA3. Within the complex UBXN2A acts as a scaffold protein required for the interaction of CHRNA3 with VCP/p97, this interaction also inhibits CHRNA3 ubiquitination by STUB1/CHIP and subsequently ERAD. Interacts with MKKS. Interacts with DNAAF4. Interacts (via the U-box domain) with the UBE2V2-UBE2N heterodimer; the complex has a specific 'Lys-63'-linked polyubiquitination activity. Interacts (when monoubiquitinated) with ATXN3. Interacts with UBE2W. Interacts with DNAJB6. Interacts with FLCN and HSP90AA1. Interacts with HSP90. Interacts with UBE2N and UBE2V1. Interacts (via TPR repeats) with HSPA8 (via C-terminus). Interacts (via TPR repeats) with HSPA1A (via C-terminus). Interacts with the non-acetylated form of HSPA1A and HSPA1B. Interacts with SMAD3 and HSP90AB1. Interacts with UBE4B. Interacts with PRMT5. Interacts with MYOCD (via C-terminus). Interacts with FOXO1 (when phosphorylated on 'Ser-253'). Interacts with MAPK7/ERK5; the interaction is enhanced in the presence of IGF1 or MAP2K5 and promotes STUB1/CHIP E3 ligase activity. Interacts with and ubiquitinates ESR1; the interaction is promoted in the absence of estradiol (17-beta-estradiol/E2). Interacts with ESR2. Interacts with and ubiquitinates NFATC3; HSPA1A/HSP70 is required as a co-chaperone. In macrophages, interacts with PAQR3; the interaction promotes PPARG poylubiquitination and STUB1-mediated degradation. Component of the chaperone-assisted selective autophagy (CASA) complex consisting of BAG3, HSPA8/HSC70, HSPB8 and STUB1/CHIP. Auto-ubiquitinated; mediated by UBE2D1 and UBE2D2 and enhanced in the presence of MAP2K5. Monoubiquitinated at Lys-2 following cell stress by UBE2W, promoting the interaction with ATXN3. As to expression, expressed in the brain.

It is found in the cytoplasm. It localises to the nucleus. The protein resides in the mitochondrion. It catalyses the reaction S-ubiquitinyl-[E2 ubiquitin-conjugating enzyme]-L-cysteine + [acceptor protein]-L-lysine = [E2 ubiquitin-conjugating enzyme]-L-cysteine + N(6)-ubiquitinyl-[acceptor protein]-L-lysine.. It functions in the pathway protein modification; protein ubiquitination. Its function is as follows. E3 ubiquitin-protein ligase which targets misfolded chaperone substrates towards proteasomal degradation. Plays a role in the maintenance of mitochondrial morphology and promotes mitophagic removal of dysfunctional mitochondria; thereby acts as a protector against apoptosis in response to cellular stress. Negatively regulates vascular smooth muscle contraction, via degradation of the transcriptional activator MYOCD and subsequent loss of transcription of genes involved in vascular smooth muscle contraction. Promotes survival and proliferation of cardiac smooth muscle cells via ubiquitination and degradation of FOXO1, resulting in subsequent repression of FOXO1-mediated transcription of pro-apoptotic genes. Ubiquitinates ICER-type isoforms of CREM and targets them for proteasomal degradation, thereby acts as a positive effector of MAPK/ERK-mediated inhibition of apoptosis in cardiomyocytes. Inhibits lipopolysaccharide-induced apoptosis and hypertrophy in cardiomyocytes, via ubiquitination and subsequent proteasomal degradation of NFATC3. Collaborates with ATXN3 in the degradation of misfolded chaperone substrates: ATXN3 restricting the length of ubiquitin chain attached to STUB1/CHIP substrates and preventing further chain extension. Ubiquitinates NOS1 in concert with Hsp70 and Hsp40. Modulates the activity of several chaperone complexes, including Hsp70, Hsc70 and Hsp90. Ubiquitinates CHRNA3 targeting it for endoplasmic reticulum-associated degradation in cortical neurons, as part of the STUB1-VCP-UBXN2A complex. Ubiquitinates and promotes ESR1 proteasomal degradation in response to age-related circulating estradiol (17-beta-estradiol/E2) decline, thereby promotes neuronal apoptosis in response to ischemic reperfusion injury. Mediates transfer of non-canonical short ubiquitin chains to HSPA8 that have no effect on HSPA8 degradation. Mediates polyubiquitination of DNA polymerase beta (POLB) at 'Lys-41', 'Lys-61' and 'Lys-81', thereby playing a role in base-excision repair: catalyzes polyubiquitination by amplifying the HUWE1/ARF-BP1-dependent monoubiquitination and leading to POLB-degradation by the proteasome. Mediates polyubiquitination of CYP3A4. Ubiquitinates EPHA2 and may regulate the receptor stability and activity through proteasomal degradation. Acts as a co-chaperone for HSPA1A and HSPA1B chaperone proteins and promotes ubiquitin-mediated protein degradation. Negatively regulates the suppressive function of regulatory T-cells (Treg) during inflammation by mediating the ubiquitination and degradation of FOXP3 in a HSPA1A/B-dependent manner. Catalyzes monoubiquitination of SIRT6, preventing its degradation by the proteasome. Likely mediates polyubiquitination and down-regulates plasma membrane expression of PD-L1/CD274, an immune inhibitory ligand critical for immune tolerance to self and antitumor immunity. Negatively regulates TGF-beta signaling by modulating the basal level of SMAD3 via ubiquitin-mediated degradation. Plays a role in the degradation of TP53. Mediates ubiquitination of RIPK3 leading to its subsequent proteasome-dependent degradation. May regulate myosin assembly in striated muscles together with UBE4B and VCP/p97 by targeting myosin chaperone UNC45B for proteasomal degradation. Ubiquitinates PPARG in macrophages playing a role in M2 macrophages polarization and angiogenesis. The protein is E3 ubiquitin-protein ligase CHIP of Mus musculus (Mouse).